Here is a 457-residue protein sequence, read N- to C-terminus: Guanine nucleotide-binding protein subunit alpha homolog (457 aa).

In terms of domain architecture, G-alpha spans 131–457 (RQVKLLLLGA…QRNLNALMLQ (327 aa)). The segment at 134-147 (KLLLLGAGESGKST) is G1 motif. Residues 139–146 (GAGESGKS), 274–280 (LHCRKAT), 299–303 (DVGGQ), 369–372 (NKTD), and alanine 429 each bind GTP. 2 residues coordinate Mg(2+): serine 146 and threonine 280. The G2 motif stretch occupies residues 272 to 280 (DILHCRKAT). The tract at residues 295–304 (FVFVDVGGQR) is G3 motif. The interval 365–372 (ILFLNKTD) is G4 motif. The interval 427–432 (TTAIDT) is G5 motif.

It belongs to the G-alpha family. G(12) subfamily. As to quaternary structure, g proteins are composed of 3 units; alpha, beta and gamma. The alpha chain contains the guanine nucleotide binding site. In terms of tissue distribution, in ovary, expressed in nurse cells and oocyte. In early embryos, distributed uniformly. At the extended germband stage, accumulates in the mesoderm.

It localises to the cytoplasm. Its function is as follows. May play a role in a signal transduction pathway used during gastrulation. Required specifically for the ventral furrow and posterior midgut invaginations, where it is necessary for coordinating cell shape changes. In terms of biological role, guanine nucleotide-binding proteins (G proteins) are involved as modulators or transducers in various transmembrane signaling systems. The sequence is that of Guanine nucleotide-binding protein subunit alpha homolog (cta) from Drosophila melanogaster (Fruit fly).